The following is a 204-amino-acid chain: Outer-membrane lipoprotein LolB (204 aa).

Residues 1–20 form the signal peptide; sequence MLRSRRLALLCLATPLWLAA. Residue Cys21 is the site of N-palmitoyl cysteine attachment. Residue Cys21 is the site of S-diacylglycerol cysteine attachment. The disordered stretch occupies residues 131–150; the sequence is GRAAPGTPSNVTRDANGRPD.

Belongs to the LolB family. Monomer.

The protein localises to the cell outer membrane. Functionally, plays a critical role in the incorporation of lipoproteins in the outer membrane after they are released by the LolA protein. The protein is Outer-membrane lipoprotein LolB of Cupriavidus metallidurans (strain ATCC 43123 / DSM 2839 / NBRC 102507 / CH34) (Ralstonia metallidurans).